The primary structure comprises 608 residues: Amino-acid acetyltransferase, mitochondrial (608 aa).

Residues 402 to 604 (LNLITEHEKG…DICTRIEPSL (203 aa)) enclose the N-acetyltransferase domain.

This sequence belongs to the acetyltransferase family.

It localises to the mitochondrion. It catalyses the reaction L-glutamate + acetyl-CoA = N-acetyl-L-glutamate + CoA + H(+). It functions in the pathway amino-acid biosynthesis; L-arginine biosynthesis; N(2)-acetyl-L-ornithine from L-glutamate: step 1/4. N-acetylglutamate synthase involved in arginine biosynthesis. This is Amino-acid acetyltransferase, mitochondrial (ARG2) from Yarrowia lipolytica (strain CLIB 122 / E 150) (Yeast).